We begin with the raw amino-acid sequence, 123 residues long: uncharacterized protein (123 aa).

The N-terminal stretch at 1-24 (MLPLCLTFLSFFLSLGGSFKAVMT) is a signal peptide. The next 2 helical transmembrane spans lie at 39–59 (FWIFNWTVTLIPLNSLVALAI) and 101–121 (FGGILTIDLSFYWALGVALTG).

The protein localises to the membrane. This is an uncharacterized protein from Saccharomyces cerevisiae (strain ATCC 204508 / S288c) (Baker's yeast).